Here is a 203-residue protein sequence, read N- to C-terminus: Glycerol-3-phosphate acyltransferase (203 aa).

Helical transmembrane passes span 6–26 (LTLL…AVLV), 82–102 (AISL…PIFF), 118–138 (APIG…LLLI), and 141–161 (YSSL…WWLD).

This sequence belongs to the PlsY family. As to quaternary structure, probably interacts with PlsX.

The protein resides in the cell inner membrane. It carries out the reaction an acyl phosphate + sn-glycerol 3-phosphate = a 1-acyl-sn-glycero-3-phosphate + phosphate. It participates in lipid metabolism; phospholipid metabolism. Its function is as follows. Catalyzes the transfer of an acyl group from acyl-phosphate (acyl-PO(4)) to glycerol-3-phosphate (G3P) to form lysophosphatidic acid (LPA). This enzyme utilizes acyl-phosphate as fatty acyl donor, but not acyl-CoA or acyl-ACP. The protein is Glycerol-3-phosphate acyltransferase of Shewanella putrefaciens (strain CN-32 / ATCC BAA-453).